Consider the following 27-residue polypeptide: Phospholipase A2 1 (27 aa).

The protein belongs to the phospholipase A2 family. Group I subfamily. Requires Ca(2+) as cofactor. As to expression, expressed by the venom gland.

It localises to the secreted. The catalysed reaction is a 1,2-diacyl-sn-glycero-3-phosphocholine + H2O = a 1-acyl-sn-glycero-3-phosphocholine + a fatty acid + H(+). Its function is as follows. Snake venom phospholipase A2 (PLA2) that inhibits neuromuscular transmission by blocking acetylcholine release from the nerve termini. PLA2 catalyzes the calcium-dependent hydrolysis of the 2-acyl groups in 3-sn-phosphoglycerides. The polypeptide is Phospholipase A2 1 (Micrurus nigrocinctus (Central American coral snake)).